Consider the following 347-residue polypeptide: VIP36-like protein (347 aa).

Positions 1 to 43 (MAAASRPSWWQRWRRRAWARDGAKLLLFLLLLGSGPGPRHVRA) are cleaved as a signal peptide. The Lumenal segment spans residues 44–312 (GQAVEYLKRE…VPPTPLSGLA (269 aa)). Positions 48 to 273 (EYLKREHSLS…DVISLKLFEL (226 aa)) constitute an L-type lectin-like domain. Residues Ser92 and Asp127 each coordinate a carbohydrate. Positions 158, 160, and 162 each coordinate Ca(2+). 160–162 (YPN) provides a ligand contact to a carbohydrate. N-linked (GlcNAc...) asparagine glycosylation occurs at Asn180. His187 is an a carbohydrate binding site. Asp190 lines the Ca(2+) pocket. Cys199 and Cys236 are disulfide-bonded. 257–259 (GDL) lines the a carbohydrate pocket. A helical membrane pass occupies residues 313–335 (LFLIVFFSLVFSVFAIVIGIILY). At 336–347 (NKWQDQSRKRFY) the chain is on the cytoplasmic side. Residues 343–345 (RKR) carry the Endoplasmic reticulum retention signal motif.

It is found in the endoplasmic reticulum membrane. The protein localises to the golgi apparatus membrane. In terms of biological role, may be involved in the regulation of export from the endoplasmic reticulum of a subset of glycoproteins. May function as a regulator of ERGIC-53. This chain is VIP36-like protein (Lman2l), found in Mus musculus (Mouse).